Reading from the N-terminus, the 330-residue chain is Calponin-3 (330 aa).

At K23 the chain carries N6-acetyllysine. The Calponin-homology (CH) domain occupies 26 to 130; sequence QQAEEDLRNW…TLVALAGLAK (105 aa). K158 is subject to N6-methyllysine. 3 Calponin-like repeats span residues 164–189, 204–229, and 243–268; these read IGLQ…RHLY, ISLQ…RDIY, and ISLQ…RQVY. The tract at residues 279–330 is disordered; that stretch reads PVIHNGSQGTGTNGSEISDSDYQAEYPDEYHGEYPDEYPREYQYGDDQGIDY. Residues 306-318 show a composition bias toward basic and acidic residues; sequence DEYHGEYPDEYPR.

The protein belongs to the calponin family.

Functionally, thin filament-associated protein that is implicated in the regulation and modulation of smooth muscle contraction. It is capable of binding to actin, calmodulin and tropomyosin. The interaction of calponin with actin inhibits the actomyosin Mg-ATPase activity. The polypeptide is Calponin-3 (Cnn3) (Rattus norvegicus (Rat)).